Here is a 519-residue protein sequence, read N- to C-terminus: UvrABC system protein C (519 aa).

A GIY-YIG domain is found at 9–87 (HLPGCYLFKN…IKKHWPRYNI (79 aa)). Residues 191-226 (RELIESMEKDMRELASRQQFEQAMALRDEIAALEYL) enclose the UVR domain.

It belongs to the UvrC family. As to quaternary structure, interacts with UvrB in an incision complex.

The protein localises to the cytoplasm. Its function is as follows. The UvrABC repair system catalyzes the recognition and processing of DNA lesions. UvrC both incises the 5' and 3' sides of the lesion. The N-terminal half is responsible for the 3' incision and the C-terminal half is responsible for the 5' incision. The polypeptide is UvrABC system protein C (Methanosarcina barkeri (strain Fusaro / DSM 804)).